The following is a 266-amino-acid chain: GTP-binding protein Rhes (266 aa).

26 to 33 (GASRVGKS) lines the GTP pocket. An Effector region motif is present at residues 48 to 56 (YTPTIEDFH). Residues 73–77 (DTSGN) and 140–143 (NKND) contribute to the GTP site. The tract at residues 189–235 (MAKLPHEMSPALHRKISVQYGDAFHPRPFCMRRVKEMDAYGMVSPFA) is interaction with GNB1, GNB2 and GNB3. Residue Cys-263 is modified to Cysteine methyl ester. Cys-263 carries the S-farnesyl cysteine lipid modification. Residues 264–266 (TIQ) constitute a propeptide, removed in mature form.

It belongs to the small GTPase superfamily. RasD family. In terms of assembly, monomer (Potential). Interacts with PIK3CA and UBE2I. Interacts with GNB1, GNB2 and GNB3. Interacts with HTT; interacts with mutant HTT (mHTT) with a much higher affinity than wild type HTT. Post-translationally, farnesylated. Farnesylation is required for membrane targeting. In terms of tissue distribution, pancreatic endocrine cells (islets of Langerhans).

The protein localises to the cell membrane. Functionally, GTPase signaling protein that binds to and hydrolyzes GTP. Regulates signaling pathways involving G-proteins-coupled receptor and heterotrimeric proteins such as GNB1, GNB2 and GNB3. May be involved in selected striatal competencies, mainly locomotor activity and motor coordination. The sequence is that of GTP-binding protein Rhes (RASD2) from Homo sapiens (Human).